We begin with the raw amino-acid sequence, 345 residues long: Serine proteinase inhibitor 2 (345 aa).

This sequence belongs to the serpin family. Poxviruses subfamily.

Its subcellular location is the host cytoplasm. Viral serpin that inhibits both cysteine and serine proteinases involved in the regulation of host inflammatory and apoptosis processes. Major anti-apoptotic protein which inhibits both intrinsic and extrinsic pathways and strongly cleaves host CASP1 and CASP8 but is a rather poor inhibitor of host CASP3. Prevents the proteolytic activity of host interleukin-1-beta converting enzyme (ICE) and ICE-like enzymes. Can also block apoptosis through host tumor necrosis factor (TNF) receptor. The inhibition of host ICE is an example of a 'cross-class' interaction, in which a serpin inhibits a non-serine proteinase. Also inhibits granzyme B. In Vaccinia virus (strain Western Reserve) (VACV), this protein is Serine proteinase inhibitor 2 (OPG199).